The chain runs to 367 residues: tRNA N6-adenosine threonylcarbamoyltransferase (367 aa).

Residues His123 and His127 each coordinate Fe cation. Substrate is bound by residues 145–149, Asp178, Gly191, and Asn288; that span reads LVSGG. Asp316 contributes to the Fe cation binding site.

This sequence belongs to the KAE1 / TsaD family. It depends on Fe(2+) as a cofactor.

The protein resides in the cytoplasm. It carries out the reaction L-threonylcarbamoyladenylate + adenosine(37) in tRNA = N(6)-L-threonylcarbamoyladenosine(37) in tRNA + AMP + H(+). Required for the formation of a threonylcarbamoyl group on adenosine at position 37 (t(6)A37) in tRNAs that read codons beginning with adenine. Is involved in the transfer of the threonylcarbamoyl moiety of threonylcarbamoyl-AMP (TC-AMP) to the N6 group of A37, together with TsaE and TsaB. TsaD likely plays a direct catalytic role in this reaction. This chain is tRNA N6-adenosine threonylcarbamoyltransferase, found in Caulobacter vibrioides (strain ATCC 19089 / CIP 103742 / CB 15) (Caulobacter crescentus).